The sequence spans 245 residues: Lactate utilization protein A (245 aa).

The protein belongs to the LutA/YkgE family.

Is involved in L-lactate degradation and allows cells to grow with lactate as the sole carbon source. This is Lactate utilization protein A from Macrococcus caseolyticus (strain JCSC5402) (Macrococcoides caseolyticum).